The sequence spans 819 residues: Zinc finger protein with KRAB and SCAN domains 5 (819 aa).

Positions 51–132 (QRFKHFQYHE…AVIESIQREL (82 aa)) constitute an SCAN box domain. Glycyl lysine isopeptide (Lys-Gly) (interchain with G-Cter in SUMO2) cross-links involve residues lysine 214, lysine 246, and lysine 302. Positions 216 to 287 (EDVADVAVSF…HWVAAERTEK (72 aa)) constitute a KRAB domain. 2 disordered regions span residues 236-263 (SQKS…KEGN) and 283-340 (ERTE…GERG). Basic and acidic residues predominate over residues 240-249 (LGRDSRKEDC). The segment covering 329–340 (VNRKQKSNGERG) has biased composition (basic and acidic residues). C2H2-type zinc fingers lie at residues 341–363 (HRCG…RRIH), 369–391 (FKCG…QRVH), 397–419 (YKCQ…HSVH), 425–447 (YGCN…LKRH), 540–562 (HQCN…RRIH), 568–590 (FRCE…HRVH), 596–618 (YACH…QSVH), 624–646 (FKCN…LRLH), and 652–674 (HQCH…QVLH). Residue lysine 700 forms a Glycyl lysine isopeptide (Lys-Gly) (interchain with G-Cter in SUMO2) linkage. C2H2-type zinc fingers lie at residues 708 to 730 (YQCD…YRTH), 764 to 786 (HQCN…QRIH), and 792 to 814 (LQCK…LRSH). Lysine 776 is covalently cross-linked (Glycyl lysine isopeptide (Lys-Gly) (interchain with G-Cter in SUMO2)).

Belongs to the krueppel C2H2-type zinc-finger protein family. Testis specific.

It localises to the nucleus. Its function is as follows. May be involved in transcriptional regulation. The sequence is that of Zinc finger protein with KRAB and SCAN domains 5 (Zkscan5) from Mus musculus (Mouse).